Consider the following 257-residue polypeptide: MLNIIHRLKSGMFPALFFLTSASVLAHPLTIPPGHWLEGMAVGVTELSGTLYVRDVSWQWQPRAVRMSSPDAVQAGLAAGKGGMVSESRRGQDFYILGGHTTSLTTARSGLQPSVTLLQVAPSSPRIAARGELARGQVRYGEITFTLRHLLAWQDNITGGQGWSVVSGEVTPEAEKQVKRQLWQVNGYEWTPDYAGLTARPDAFISGAESLLSQENGSQHIAGAWVTSLSDVRVNFPGAEEPVKRWQGNLTPVVVYF.

A signal peptide spans 1–26; sequence MLNIIHRLKSGMFPALFFLTSASVLA.

The protein resides in the fimbrium. Functionally, K88 minor fimbrial subunit, plays an essential role in the biogenesis of the K88 fimbriae. Fimbriae (also called pili), are polar filaments radiating from the surface of the bacterium to a length of 0.5-1.5 micrometers and numbering 100-300 per cell. They enable bacteria to colonize the epithelium of specific host organs. This chain is K88 minor fimbrial subunit FaeJ (faeJ), found in Escherichia coli.